The chain runs to 395 residues: Vomeronasal type-1 receptor 2 (395 aa).

Residues 12-32 (LYPINISAAWHLGPLPVSCFV) form a helical membrane-spanning segment. The Extracellular portion of the chain corresponds to 33–51 (SNKYQCSLAFGATTGLRVL). A helical transmembrane segment spans residues 52 to 72 (VVVVPQTQLSFLSSLCLVSLF). Over 73-93 (LHSLVSAHGEKPTKPVGLDPT) the chain is Cytoplasmic. Residues 94–114 (LFQVVVGILGNFSLLYYYMFL) traverse the membrane as a helical segment. Over 115-170 (YFRGYKPRSTDLILRHLTVADSLVILSKRIPETMATFGLKHFDNYFGCKFLLYAHR) the chain is Extracellular. Residues 171-191 (VGRGVSIGSTCLLSVFQVITI) traverse the membrane as a helical segment. The Cytoplasmic portion of the chain corresponds to 192 to 208 (NPRNSRWAEMKVKAPTY). A helical membrane pass occupies residues 209 to 229 (IGLSNILCWAFHMLVNAIFPI). Topologically, residues 230–267 (YTTGKWSNNNITKKGDLGYCSAPLSDEVTKSVYAALTS) are extracellular. An N-linked (GlcNAc...) asparagine glycan is attached at asparagine 239. Residues 268 to 288 (FHDVLCLGLMLWASSSIVLVL) traverse the membrane as a helical segment. Residues 289-316 (YRHKQQVQHICRNNLYPNSSPGNRAIQS) are Cytoplasmic-facing. A helical transmembrane segment spans residues 317 to 337 (ILALVSTFALCYALSFITYVY). Over 338 to 346 (LALFDNSSW) the chain is Extracellular. N-linked (GlcNAc...) asparagine glycosylation is present at asparagine 343. A helical transmembrane segment spans residues 347-367 (WLVNTAALIIACFPTISPFVL). Residues 368–395 (MCRDPSRSRLCSICCRRNRRFFHDFRKM) lie on the Cytoplasmic side of the membrane.

It belongs to the G-protein coupled receptor 1 family.

It localises to the cell membrane. Its function is as follows. Putative pheromone receptor. This Homo sapiens (Human) protein is Vomeronasal type-1 receptor 2 (VN1R2).